The sequence spans 311 residues: MNDLMTKSFMSYVDLKKAAMKDLEAGGDGVELPEVGVTDERLKGFFQETEAVEEEMAAIRDALARLNAANEEGKSLHQPDALRALRGRVNADIIAVLRRARDIRARLEAMDRANAAQRRLSAGCREGTPLDRTRTALTAALRKKLKDLMLDFQALRQRIMSEYKDTVERRYYTLTGEVPEEEVIERIISEGRSEELLCAAVAEHGKGAVLATVHEIQDRHDAAREVERSLLELHQVFLDMAVVVESQGEQLDDIERHVNSATTYVQGGNKELRKAREHQRSSRKWLCIGIIILLLLVLLVIVPIATSFKRS.

The Cytoplasmic segment spans residues 1 to 284 (MNDLMTKSFM…AREHQRSSRK (284 aa)). A t-SNARE coiled-coil homology domain is found at 213 to 275 (VHEIQDRHDA…QGGNKELRKA (63 aa)). Residues 285-305 (WLCIGIIILLLLVLLVIVPIA) traverse the membrane as a helical; Anchor for type IV membrane protein segment. Residues 306–311 (TSFKRS) are Vesicular-facing.

Belongs to the syntaxin family. Expressed in roots and panicles.

The protein resides in the cell membrane. It is found in the cytoplasm. In terms of biological role, vesicle trafficking protein that functions in the secretory pathway. The chain is Syntaxin-111 from Oryza sativa subsp. japonica (Rice).